Reading from the N-terminus, the 236-residue chain is Potassium/proton antiporter CemA (236 aa).

4 consecutive transmembrane segments (helical) span residues 18 to 38 (YIIS…FLVL), 114 to 134 (IAHV…LINA), 161 to 181 (LILF…KILI), and 196 to 216 (FIFL…KYWI).

It belongs to the CemA family.

Its subcellular location is the plastid. The protein localises to the chloroplast inner membrane. The catalysed reaction is K(+)(in) + H(+)(out) = K(+)(out) + H(+)(in). In terms of biological role, contributes to K(+)/H(+) antiport activity by supporting proton efflux to control proton extrusion and homeostasis in chloroplasts in a light-dependent manner to modulate photosynthesis. Prevents excessive induction of non-photochemical quenching (NPQ) under continuous-light conditions. Indirectly promotes efficient inorganic carbon uptake into chloroplasts. In Mesostigma viride (Green alga), this protein is Potassium/proton antiporter CemA.